The sequence spans 154 residues: Large ribosomal subunit protein uL15 (154 aa).

A disordered region spans residues 1–61 (MDLSTLKPVA…GGQMPLMRRM (61 aa)).

Belongs to the universal ribosomal protein uL15 family. In terms of assembly, part of the 50S ribosomal subunit.

Functionally, binds to the 23S rRNA. The chain is Large ribosomal subunit protein uL15 from Oenococcus oeni (strain ATCC BAA-331 / PSU-1).